We begin with the raw amino-acid sequence, 123 residues long: Large ribosomal subunit protein uL18 (123 aa).

It belongs to the universal ribosomal protein uL18 family. In terms of assembly, part of the 50S ribosomal subunit; part of the 5S rRNA/L5/L18/L25 subcomplex. Contacts the 5S and 23S rRNAs.

Functionally, this is one of the proteins that bind and probably mediate the attachment of the 5S RNA into the large ribosomal subunit, where it forms part of the central protuberance. This is Large ribosomal subunit protein uL18 from Wolbachia pipientis subsp. Culex pipiens (strain wPip).